The primary structure comprises 120 residues: Non-specific lipid-transfer protein 6 (120 aa).

The N-terminal stretch at 1 to 26 (MARSMSLKLACVVVLCLLVDAPLAQG) is a signal peptide. 2 disulfide bridges follow: cysteine 57/cysteine 102 and cysteine 77/cysteine 116.

The protein belongs to the plant LTP family. In terms of tissue distribution, specifically expressed in fiber cells.

Plant non-specific lipid-transfer proteins transfer phospholipids as well as galactolipids across membranes. May play a role in wax or cutin deposition in the cell walls of expanding epidermal cells and certain secretory tissues. The sequence is that of Non-specific lipid-transfer protein 6 (LTP6) from Gossypium hirsutum (Upland cotton).